The chain runs to 104 residues: Phosphoribosyl-ATP pyrophosphatase (104 aa).

The protein belongs to the PRA-PH family.

The protein localises to the cytoplasm. It catalyses the reaction 1-(5-phospho-beta-D-ribosyl)-ATP + H2O = 1-(5-phospho-beta-D-ribosyl)-5'-AMP + diphosphate + H(+). It participates in amino-acid biosynthesis; L-histidine biosynthesis; L-histidine from 5-phospho-alpha-D-ribose 1-diphosphate: step 2/9. In Allorhizobium ampelinum (strain ATCC BAA-846 / DSM 112012 / S4) (Agrobacterium vitis (strain S4)), this protein is Phosphoribosyl-ATP pyrophosphatase.